The primary structure comprises 155 residues: Small ribosomal subunit protein uS17 (155 aa).

The residue at position 2 (alanine 2) is an N-acetylalanine.

It belongs to the universal ribosomal protein uS17 family.

The sequence is that of Small ribosomal subunit protein uS17 from Drosophila pseudoobscura pseudoobscura (Fruit fly).